Reading from the N-terminus, the 431-residue chain is Enolase (431 aa).

Glutamine 166 is a binding site for (2R)-2-phosphoglycerate. The active-site Proton donor is glutamate 208. 3 residues coordinate Mg(2+): aspartate 245, glutamate 288, and aspartate 315. 4 residues coordinate (2R)-2-phosphoglycerate: lysine 340, arginine 369, serine 370, and lysine 391. Residue lysine 340 is the Proton acceptor of the active site.

Belongs to the enolase family. Mg(2+) is required as a cofactor.

The protein resides in the cytoplasm. It is found in the secreted. It localises to the cell surface. It catalyses the reaction (2R)-2-phosphoglycerate = phosphoenolpyruvate + H2O. The protein operates within carbohydrate degradation; glycolysis; pyruvate from D-glyceraldehyde 3-phosphate: step 4/5. Functionally, catalyzes the reversible conversion of 2-phosphoglycerate (2-PG) into phosphoenolpyruvate (PEP). It is essential for the degradation of carbohydrates via glycolysis. This chain is Enolase, found in Clostridium tetani (strain Massachusetts / E88).